Consider the following 317-residue polypeptide: Beta-ketoacyl-[acyl-carrier-protein] synthase III (317 aa).

Active-site residues include cysteine 112 and histidine 244. An ACP-binding region spans residues 245 to 249; it reads QANLR. Residue asparagine 274 is part of the active site.

Belongs to the thiolase-like superfamily. FabH family. As to quaternary structure, homodimer.

The protein resides in the cytoplasm. The catalysed reaction is malonyl-[ACP] + acetyl-CoA + H(+) = 3-oxobutanoyl-[ACP] + CO2 + CoA. It participates in lipid metabolism; fatty acid biosynthesis. In terms of biological role, catalyzes the condensation reaction of fatty acid synthesis by the addition to an acyl acceptor of two carbons from malonyl-ACP. Catalyzes the first condensation reaction which initiates fatty acid synthesis and may therefore play a role in governing the total rate of fatty acid production. Possesses both acetoacetyl-ACP synthase and acetyl transacylase activities. Its substrate specificity determines the biosynthesis of branched-chain and/or straight-chain of fatty acids. This Pasteurella multocida (strain Pm70) protein is Beta-ketoacyl-[acyl-carrier-protein] synthase III.